The sequence spans 495 residues: Protein YhjJ (495 aa).

The first 24 residues, 1–24 (MQGTKIRLLAGSLLMLASAGYVQA), serve as a signal peptide directing secretion.

It belongs to the peptidase M16 family.

Its subcellular location is the periplasm. The chain is Protein YhjJ (yhjJ) from Salmonella typhimurium (strain LT2 / SGSC1412 / ATCC 700720).